The following is a 117-amino-acid chain: Gamma-aminobutyric acid receptor-associated protein-like 1 (117 aa).

Gly-116 carries Phosphatidylethanolamine amidated glycine; alternate lipidation. Residue Gly-116 is the site of Phosphatidylserine amidated glycine; alternate attachment. A propeptide (removed in mature form) is located at residue Lys-117.

It belongs to the ATG8 family. In terms of assembly, interacts with ATG13, OPRK1, RB1CC1 and ULK1. Interacts with TP53INP1 and TP53INP2. Directly interacts with SQSTM1. Interacts with ATG3, ATG7 and MAP15. Interacts with TECPR2. Interacts with TBC1D5. Interacts with MAPK15. Interacts with TRIM5. Interacts with MEFV and TRIM21. Interacts with WDFY3. Interacts with the reticulophagy receptor TEX264. Interacts with UBA5. Interacts with KBTBD6 and KBTBD7; the interaction is direct. Interacts with reticulophagy regulators RETREG1, RETREG2 and RETREG3. Interacts with IRGM. Interacts with DNM2. Interacts with NCOA4 (via C-terminus). Post-translationally, the precursor molecule is cleaved by ATG4 (ATG4A, ATG4B, ATG4C or ATG4D) to expose the glycine at the C-terminus and form the cytosolic form, GABARAPL1-I. The processed form is then activated by APG7L/ATG7, transferred to ATG3 and conjugated to phosphatidylethanolamine (PE) phospholipid to form the membrane-bound form, GABARAPL1-II. During non-canonical autophagy, the processed form is conjugated to phosphatidylserine (PS) phospholipid. ATG4 proteins also mediate the delipidation of PE-conjugated forms required for GABARAPL1 recycling when autophagosomes fuse with lysosomes. In addition, ATG4B and ATG4D mediate delipidation of ATG8 proteins conjugated to PS during non-canonical autophagy. ATG4B constitutes the major protein for proteolytic activation. ATG4D is the main enzyme for delipidation activity.

Its subcellular location is the cytoplasmic vesicle. It localises to the autophagosome. The protein resides in the cytoplasmic vesicle membrane. The protein localises to the cytoplasm. It is found in the cytoskeleton. Its subcellular location is the endoplasmic reticulum. It localises to the golgi apparatus. Its function is as follows. Ubiquitin-like modifier that increases cell-surface expression of kappa-type opioid receptor through facilitating anterograde intracellular trafficking of the receptor. Involved in formation of autophagosomal vacuoles. While LC3s are involved in elongation of the phagophore membrane, the GABARAP/GATE-16 subfamily is essential for a later stage in autophagosome maturation. Through its interaction with the reticulophagy receptor TEX264, participates in the remodeling of subdomains of the endoplasmic reticulum into autophagosomes upon nutrient stress, which then fuse with lysosomes for endoplasmic reticulum turnover. The polypeptide is Gamma-aminobutyric acid receptor-associated protein-like 1 (Bos taurus (Bovine)).